A 343-amino-acid chain; its full sequence is Signal peptide peptidase 2 (343 aa).

The Lumenal portion of the chain corresponds to 1–19; the sequence is MKTHERAANLALAGLSLAP. A helical transmembrane segment spans residues 20–40; that stretch reads LVVKVNPNANVILTACLAVYV. The Cytoplasmic segment spans residues 41–62; that stretch reads GCYRSVKPTPPAETMSKEHAMR. Residues 63–83 traverse the membrane as a helical segment; it reads FPLVGSAMLLSLFLLFKFLSK. Over 84–89 the chain is Lumenal; that stretch reads DLVNTV. The helical transmembrane segment at 90–110 threads the bilayer; that stretch reads LTAYFFILGIAALCATLLPSI. Topologically, residues 111 to 141 are cytoplasmic; that stretch reads KRFLPKEWNDNAIVWRAPLFHSLSVEFTRSQ. A helical membrane pass occupies residues 142-162; the sequence is VVASIPGFFFCIWYAAKKHWL. Residues 163–165 are Lumenal-facing; that stretch reads ANN. Residues 166–186 traverse the membrane as a helical segment; that stretch reads VLGISFCIQGIEMLSLGSFKT. Residues 187 to 188 lie on the Cytoplasmic side of the membrane; that stretch reads GA. The helical transmembrane segment at 189–209 threads the bilayer; it reads ILLSGLFFYDIFWVFFTPVMV. Asp198 is a catalytic residue. Residues 210-230 lie on the Lumenal side of the membrane; that stretch reads SVAKSFDAPIKLLFPTGDAAR. A helical transmembrane segment spans residues 231 to 251; the sequence is PFSMLGLGDIVIPGIFVALAL. Asp239 is an active-site residue. Residues 252–266 lie on the Cytoplasmic side of the membrane; the sequence is RFDVSRGIKNRYFNS. The chain crosses the membrane as a helical span at residues 267-287; sequence AFLGYTVGLTVTIIVMNWFQA. Residues 288–290 are Lumenal-facing; sequence AQP. The PAL motif lies at 290-292; sequence PAL. Residues 291–311 form a helical membrane-spanning segment; sequence ALLYIVPGVIGFVAVHCLWNG. At 312-343 the chain is on the cytoplasmic side; it reads EVKPLLEYNESKAEEEEACEEDTDSKQNKKKE. A compositionally biased stretch (acidic residues) spans 324–334; sequence AEEEEACEEDT. The segment at 324–343 is disordered; sequence AEEEEACEEDTDSKQNKKKE. An Endoplasmic reticulum targeting signal motif is present at residues 340-343; it reads KKKE.

The protein belongs to the peptidase A22B family. As to expression, ubiquitous.

The protein localises to the endoplasmic reticulum membrane. Intramembrane-cleaving aspartic protease (I-CLiP) that cleaves type II membrane signal peptides in the hydrophobic plane of the membrane. Catalyzes intramembrane proteolysis of some signal peptides after they have been cleaved from a preprotein, resulting in the release of the fragment from the ER membrane into the cytoplasm. The chain is Signal peptide peptidase 2 (SPP2) from Oryza sativa subsp. japonica (Rice).